The chain runs to 471 residues: Glutamate--tRNA ligase 1 (471 aa).

A 'HIGH' region motif is present at residues 15–25; it reads PSPTGYLHIGG. Positions 243–247 match the 'KMSKS' region motif; the sequence is KLSKR. Lysine 246 is an ATP binding site.

The protein belongs to the class-I aminoacyl-tRNA synthetase family. Glutamate--tRNA ligase type 1 subfamily. Monomer.

It is found in the cytoplasm. It catalyses the reaction tRNA(Glu) + L-glutamate + ATP = L-glutamyl-tRNA(Glu) + AMP + diphosphate. In terms of biological role, catalyzes the attachment of glutamate to tRNA(Glu) in a two-step reaction: glutamate is first activated by ATP to form Glu-AMP and then transferred to the acceptor end of tRNA(Glu). The sequence is that of Glutamate--tRNA ligase 1 from Dinoroseobacter shibae (strain DSM 16493 / NCIMB 14021 / DFL 12).